The chain runs to 212 residues: Protein YIPF5 homolog (212 aa).

The Cytoplasmic portion of the chain corresponds to 1–79 (MNNNNSFNFI…KKIDSHIMDD (79 aa)). Residues 80–100 (TDLGGPILFGLLLGFSLLMSG) form a helical membrane-spanning segment. Lys101 is a topological domain (lumenal). A helical transmembrane segment spans residues 102 to 122 (IQFGYIYGLGLIGCVSMYIVL). Residues 123–128 (NLMSEK) are Cytoplasmic-facing. The helical transmembrane segment at 129-149 (GIDIYRVISVLGYCLLPMIFL) threads the bilayer. Residues 150–163 (SFTSLIININGMVG) lie on the Lumenal side of the membrane. A helical transmembrane segment spans residues 164–186 (YILIGFAIVWSTYSASKMFVKVL). Residues 187-191 (SMIDQ) are Cytoplasmic-facing. A helical transmembrane segment spans residues 192 to 212 (RILVAYPVGLLYTGFALITAF).

It belongs to the YIP1 family.

Its subcellular location is the endoplasmic reticulum membrane. It is found in the golgi apparatus. It localises to the cis-Golgi network membrane. Plays a role in transport between endoplasmic reticulum and Golgi. This is Protein YIPF5 homolog (yipf5) from Dictyostelium discoideum (Social amoeba).